We begin with the raw amino-acid sequence, 1242 residues long: ATP-dependent helicase/nuclease subunit A (1242 aa).

The UvrD-like helicase ATP-binding domain maps to 13–486 (SQWTDDQWKA…IDLAKNFRSR (474 aa)). Residue 34–41 (AAAGSGKT) coordinates ATP. Residues 506–806 (GEIEYDADAE…RIMTIHKSKG (301 aa)) enclose the UvrD-like helicase C-terminal domain.

It belongs to the helicase family. AddA subfamily. As to quaternary structure, heterodimer of AddA and AddB/RexB. Requires Mg(2+) as cofactor.

It catalyses the reaction Couples ATP hydrolysis with the unwinding of duplex DNA by translocating in the 3'-5' direction.. It carries out the reaction ATP + H2O = ADP + phosphate + H(+). Its function is as follows. The heterodimer acts as both an ATP-dependent DNA helicase and an ATP-dependent, dual-direction single-stranded exonuclease. Recognizes the chi site generating a DNA molecule suitable for the initiation of homologous recombination. The AddA nuclease domain is required for chi fragment generation; this subunit has the helicase and 3' -&gt; 5' nuclease activities. This chain is ATP-dependent helicase/nuclease subunit A, found in Bacillus cytotoxicus (strain DSM 22905 / CIP 110041 / 391-98 / NVH 391-98).